Here is a 180-residue protein sequence, read N- to C-terminus: Large ribosomal subunit protein uL6 (180 aa).

Residues 158–180 form a disordered region; sequence YSGKGISYKGEKIRRKEGKTASK.

This sequence belongs to the universal ribosomal protein uL6 family. In terms of assembly, part of the 50S ribosomal subunit.

This protein binds to the 23S rRNA, and is important in its secondary structure. It is located near the subunit interface in the base of the L7/L12 stalk, and near the tRNA binding site of the peptidyltransferase center. The chain is Large ribosomal subunit protein uL6 from Mycoplasmopsis synoviae (strain 53) (Mycoplasma synoviae).